The sequence spans 195 residues: dITP/XTP pyrophosphatase (195 aa).

8–13 (SNNQGK) serves as a coordination point for substrate. Mg(2+) contacts are provided by Glu39 and Asp68. The active-site Proton acceptor is Asp68. Residues Ser69, 149 to 152 (FGYD), Lys172, and 177 to 178 (HR) contribute to the substrate site.

It belongs to the HAM1 NTPase family. As to quaternary structure, homodimer. The cofactor is Mg(2+).

It catalyses the reaction XTP + H2O = XMP + diphosphate + H(+). It carries out the reaction dITP + H2O = dIMP + diphosphate + H(+). The enzyme catalyses ITP + H2O = IMP + diphosphate + H(+). In terms of biological role, pyrophosphatase that catalyzes the hydrolysis of nucleoside triphosphates to their monophosphate derivatives, with a high preference for the non-canonical purine nucleotides XTP (xanthosine triphosphate), dITP (deoxyinosine triphosphate) and ITP. Seems to function as a house-cleaning enzyme that removes non-canonical purine nucleotides from the nucleotide pool, thus preventing their incorporation into DNA/RNA and avoiding chromosomal lesions. The protein is dITP/XTP pyrophosphatase of Staphylococcus aureus (strain Mu50 / ATCC 700699).